A 273-amino-acid polypeptide reads, in one-letter code: 2,3,4,5-tetrahydropyridine-2,6-dicarboxylate N-succinyltransferase (273 aa).

Residues Arg-104 and Asp-141 each coordinate substrate.

The protein belongs to the transferase hexapeptide repeat family. As to quaternary structure, homotrimer.

It is found in the cytoplasm. The catalysed reaction is (S)-2,3,4,5-tetrahydrodipicolinate + succinyl-CoA + H2O = (S)-2-succinylamino-6-oxoheptanedioate + CoA. It participates in amino-acid biosynthesis; L-lysine biosynthesis via DAP pathway; LL-2,6-diaminopimelate from (S)-tetrahydrodipicolinate (succinylase route): step 1/3. The protein is 2,3,4,5-tetrahydropyridine-2,6-dicarboxylate N-succinyltransferase of Aromatoleum aromaticum (strain DSM 19018 / LMG 30748 / EbN1) (Azoarcus sp. (strain EbN1)).